An 841-amino-acid polypeptide reads, in one-letter code: Protein translocase subunit SecA (841 aa).

ATP contacts are provided by residues glutamine 87, 105 to 109 (GEGKT), and aspartate 494. Positions 825, 827, 836, and 837 each coordinate Zn(2+).

The protein belongs to the SecA family. In terms of assembly, monomer and homodimer. Part of the essential Sec protein translocation apparatus which comprises SecA, SecYEG and auxiliary proteins SecDF-YajC and YidC. Zn(2+) serves as cofactor.

The protein resides in the cell inner membrane. It localises to the cytoplasm. The catalysed reaction is ATP + H2O + cellular proteinSide 1 = ADP + phosphate + cellular proteinSide 2.. In terms of biological role, part of the Sec protein translocase complex. Interacts with the SecYEG preprotein conducting channel. Has a central role in coupling the hydrolysis of ATP to the transfer of proteins into and across the cell membrane, serving as an ATP-driven molecular motor driving the stepwise translocation of polypeptide chains across the membrane. The polypeptide is Protein translocase subunit SecA (Syntrophus aciditrophicus (strain SB)).